We begin with the raw amino-acid sequence, 1485 residues long: Glutamate receptor ionotropic, NMDA 2B (1485 aa).

Residues 1–26 (MKPRAECCSPKFWLVLAVLAVSGSRA) form the signal peptide. The Extracellular portion of the chain corresponds to 27 to 557 (RSQKSPPSIG…SAFLEPFSAD (531 aa)). Asn74 carries N-linked (GlcNAc...) asparagine glycosylation. Residues Cys86 and Cys321 are joined by a disulfide bond. Residues His127 and Glu284 each contribute to the Zn(2+) site. N-linked (GlcNAc...) asparagine glycans are attached at residues Asn341, Asn348, Asn444, and Asn491. 2 disulfide bridges follow: Cys429-Cys456 and Cys436-Cys457. 2 residues coordinate L-glutamate: Thr514 and Arg519. An N-linked (GlcNAc...) asparagine glycan is attached at Asn542. A helical membrane pass occupies residues 558 to 576 (VWVMMFVMLLIVSAVAVFV). Over 577-603 (FEYFSPVGYNRCLADGREPGGPSFTIG) the chain is Cytoplasmic. An intramembrane region (discontinuously helical) is located at residues 604-623 (KAIWLLWGLVFNNSVPVQNP). Residues 604–623 (KAIWLLWGLVFNNSVPVQNP) are pore-forming. The Cytoplasmic segment spans residues 624-630 (KGTTSKI). Residues 631–646 (MVSVWAFFAVIFLASY) form a helical membrane-spanning segment. Topologically, residues 647 to 817 (TANLAAFMIQ…VMSSQLDIDN (171 aa)) are extracellular. N-linked (GlcNAc...) asparagine glycosylation is present at Asn688. L-glutamate contacts are provided by residues 690 to 691 (ST) and Asp732. Cys746 and Cys801 are joined by a disulfide. Residues 818 to 837 (MAGVFYMLGAAMALSLITFI) traverse the membrane as a helical segment. The Cytoplasmic segment spans residues 838–1485 (CEHLFYWQFR…EKLSSIESDV (648 aa)). Phosphoserine occurs at positions 882, 886, 917, and 920. Residues Tyr962 and Tyr1039 each carry the phosphotyrosine modification. Residues Ser1058, Ser1061, and Ser1064 each carry the phosphoserine modification. Positions 1074 to 1097 (EGNAAKRRKQQYKDSLKKRPASAK) are disordered. Phosphotyrosine is present on residues Tyr1109 and Tyr1133. At Ser1143 the chain carries Phosphoserine. Tyr1155 bears the Phosphotyrosine mark. The disordered stretch occupies residues 1162–1194 (FKRDSVSGGGPCTNRSHLKHGAGDKHGVVSGVP). Ser1255 and Ser1259 each carry phosphoserine. The segment covering 1269–1278 (PVAVPSNAPS) has biased composition (low complexity). Residues 1269 to 1302 (PVAVPSNAPSTKYPQSPTNSKAQKKTRNKLRRQH) form a disordered region. The segment covering 1280-1289 (KYPQSPTNSK) has biased composition (polar residues). Over residues 1290–1301 (AQKKTRNKLRRQ) the composition is skewed to basic residues. Positions 1292 to 1304 (KKTRNKLRRQHSY) are interaction with DAPK1. Ser1303 is modified (phosphoserine; by DAPK1). Tyr1475 bears the Phosphotyrosine mark. The PDZ-binding signature appears at 1483 to 1485 (SDV).

Belongs to the glutamate-gated ion channel (TC 1.A.10.1) family. NR2B/GRIN2B subfamily. As to quaternary structure, heterotetramer. Forms heterotetrameric channels composed of two GluN1/zeta subunits (GRIN1), and two identical GluN2/epsilon subunits (GRIN2A, GRIN2B, GRIN2C or GRIN2D) or GluN3 subunits (GRIN3A or GRIN3B) (in vitro). Can also form heterotetrameric channels that contain at least two GluN1 subunits and at least two different GluN2 subunits (or a combination of one GluN2 and one GluN3 subunits) (in vitro). In vivo, the subunit composition may depend on the expression levels of the different subunits. Found in a complex with GRIN1, GRIN3A and PPP2CB. Found in a complex with GRIN1 and GRIN3B. Interacts with MAGI3. Interacts with HIP1 and Neto1. Interacts with PDZ domains of PATJ, DLG3 and DLG4. Interacts with DAPK1. Found in a complex with GRIN1 and PRR7. Interacts with PRR7. Interacts with CAMK2A. Interacts with ARC; preventing ARC oligomerization. Interacts with TMEM25. Interacts (via the extreme C-terminus) with FRMPD2 (via the second PDZ domain); the interaction is direct and is likely to promote NMDAR-mediated neural signal transmission. Interacts with FAM81A; the interaction facilitates condensate formation via liquid-liquid phase separation. Phosphorylated on tyrosine residues. Phosphorylation at Ser-1303 by DAPK1 enhances synaptic NMDA receptor channel activity.

It localises to the cell membrane. The protein localises to the postsynaptic cell membrane. Its subcellular location is the cell projection. The protein resides in the dendrite. It is found in the late endosome. It localises to the lysosome. The protein localises to the cytoplasm. Its subcellular location is the cytoskeleton. The catalysed reaction is Ca(2+)(in) = Ca(2+)(out). It carries out the reaction Na(+)(in) = Na(+)(out). It catalyses the reaction K(+)(in) = K(+)(out). Its function is as follows. Component of N-methyl-D-aspartate (NMDA) receptors (NMDARs) that function as heterotetrameric, ligand-gated cation channels with high calcium permeability and voltage-dependent block by Mg(2+). Participates in synaptic plasticity for learning and memory formation by contributing to the long-term depression (LTD) of hippocampus membrane currents. Channel activation requires binding of the neurotransmitter L-glutamate to the GluN2 subunit, glycine or D-serine binding to the GluN1 subunit, plus membrane depolarization to eliminate channel inhibition by Mg(2+). NMDARs mediate simultaneously the potasium efflux and the influx of calcium and sodium. Each GluN2 subunit confers differential attributes to channel properties, including activation, deactivation and desensitization kinetics, pH sensitivity, Ca2(+) permeability, and binding to allosteric modulators. In concert with DAPK1 at extrasynaptic sites, acts as a central mediator for stroke damage. Its phosphorylation at Ser-1303 by DAPK1 enhances synaptic NMDA receptor channel activity inducing injurious Ca2+ influx through them, resulting in an irreversible neuronal death. In Canis lupus familiaris (Dog), this protein is Glutamate receptor ionotropic, NMDA 2B.